Consider the following 775-residue polypeptide: K(+)-insensitive pyrophosphate-energized proton pump (775 aa).

5 helical membrane-spanning segments follow: residues 9-29 (SLAV…AFFI), 65-85 (ISIL…IIPP), 108-128 (AVAF…GMNV), 160-180 (MLTV…FGIA), and 185-205 (LLGF…GGGI). Position 208 (lysine 208) interacts with substrate. Mg(2+) is bound by residues aspartate 211, aspartate 215, and aspartate 241. Transmembrane regions (helical) follow at residues 259-279 (VTLV…VGTI), 288-308 (FIIF…IGNL), 327-347 (FYIA…VFMV), 359-379 (FFAT…TEYF), 413-433 (SVWA…IYAG), and 442-462 (AILY…GNTI). Aspartate 472 is a Mg(2+) binding site. 4 consecutive transmembrane segments (helical) span residues 508–528 (IAIG…FTDV), 555–575 (PVFI…ALTI), 622–642 (LISL…TLGV), and 644–664 (ALGG…VFQA). The Ca(2+) site is built by aspartate 671, aspartate 697, and aspartate 701. Position 704 (lysine 704) interacts with substrate. The next 2 membrane-spanning stretches (helical) occupy residues 710–730 (ALNP…PIVV) and 735–755 (GSPG…WAIW).

Belongs to the H(+)-translocating pyrophosphatase (TC 3.A.10) family. K(+)-insensitive subfamily. Homodimer. Mg(2+) is required as a cofactor.

It localises to the cell membrane. The catalysed reaction is diphosphate + H2O + H(+)(in) = 2 phosphate + 2 H(+)(out). In terms of biological role, proton pump that utilizes the energy of pyrophosphate hydrolysis as the driving force for proton movement across the membrane. Generates a proton motive force. This Chloroflexus aurantiacus (strain ATCC 29366 / DSM 635 / J-10-fl) protein is K(+)-insensitive pyrophosphate-energized proton pump.